The following is a 157-amino-acid chain: Peptide methionine sulfoxide reductase MsrB (157 aa).

The region spanning 14 to 137 is the MsrB domain; sequence DNDLRERLTP…NSAALRFVPL (124 aa). The active-site Nucleophile is C126.

Belongs to the MsrB Met sulfoxide reductase family.

The enzyme catalyses L-methionyl-[protein] + [thioredoxin]-disulfide + H2O = L-methionyl-(R)-S-oxide-[protein] + [thioredoxin]-dithiol. The sequence is that of Peptide methionine sulfoxide reductase MsrB from Deinococcus radiodurans (strain ATCC 13939 / DSM 20539 / JCM 16871 / CCUG 27074 / LMG 4051 / NBRC 15346 / NCIMB 9279 / VKM B-1422 / R1).